The chain runs to 355 residues: Protein ATP1B4 (355 aa).

Residues 1–108 (MRRQLRSRRA…SLARTGQSLS (108 aa)) are Nuclear-facing. A disordered region spans residues 35-76 (EEEEAEEARVMVVPDLEEEEKEEEEEKEEDEKEEEESHHQDT). Acidic residues predominate over residues 49-68 (DLEEEEKEEEEEKEEDEKEE). A helical; Signal-anchor for type II membrane protein membrane pass occupies residues 109-129 (LLLVIYFFFYASLAAVITLCM). Over 130–355 (YTLFLTISPY…RVIFTLNIET (226 aa)) the chain is Perinuclear space.

The protein belongs to the X(+)/potassium ATPases subunit beta family. As to quaternary structure, associates with a SMAD7-transcriptional complex. Interacts with SNW1 and TOR1AIP1. Does not associate with known Na,K-ATPase alpha-subunits. In terms of tissue distribution, expressed in skeletal muscle (at protein level). Expressed during postnatal development in skeletal muscle and heart.

The protein resides in the nucleus inner membrane. Functionally, may act as a transcriptional coregulator during muscle development through its interaction with SNW1. Has lost its ancestral function as a Na,K-ATPase beta-subunit. The sequence is that of Protein ATP1B4 (ATP1B4) from Sus scrofa (Pig).